Here is a 51-residue protein sequence, read N- to C-terminus: MSHNMKGQKIRLAKAHKQNTRVPVWVIVKTNRKVVSHPRRRHWRRRSLDVK.

Belongs to the eukaryotic ribosomal protein eL39 family.

The chain is Large ribosomal subunit protein eL39 from Methanosarcina barkeri (strain Fusaro / DSM 804).